A 176-amino-acid polypeptide reads, in one-letter code: dCTP deaminase (176 aa).

DCTP is bound by residues 99–104 (RSTLAR) and D115. Catalysis depends on E125, which acts as the Proton donor/acceptor. Position 163 (Q163) interacts with dCTP.

It belongs to the dCTP deaminase family. As to quaternary structure, homotrimer.

The enzyme catalyses dCTP + H2O + H(+) = dUTP + NH4(+). Its pathway is pyrimidine metabolism; dUMP biosynthesis; dUMP from dCTP (dUTP route): step 1/2. In terms of biological role, catalyzes the deamination of dCTP to dUTP. In Pyrobaculum islandicum (strain DSM 4184 / JCM 9189 / GEO3), this protein is dCTP deaminase.